The primary structure comprises 322 residues: Serine/threonine-protein phosphatase PP1-2 (322 aa).

Residues D60, H62, D88, and N120 each coordinate Mn(2+). The active-site Proton donor is the H121. Mn(2+) is bound by residues H169 and H244. Positions 298–322 (RQRVSQSSIKESKSATNSLKKSKNN) are disordered. Residues 301–316 (VSQSSIKESKSATNSL) show a composition bias toward polar residues.

Belongs to the PPP phosphatase family. PP-1 subfamily. Mn(2+) serves as cofactor.

It carries out the reaction O-phospho-L-seryl-[protein] + H2O = L-seryl-[protein] + phosphate. The catalysed reaction is O-phospho-L-threonyl-[protein] + H2O = L-threonyl-[protein] + phosphate. Functionally, essential role in cell cycle control. PP1 is perhaps required for exit from mitosis. In Schizosaccharomyces pombe (strain 972 / ATCC 24843) (Fission yeast), this protein is Serine/threonine-protein phosphatase PP1-2 (sds21).